Consider the following 89-residue polypeptide: Large ribosomal subunit protein uL23c (89 aa).

It belongs to the universal ribosomal protein uL23 family. In terms of assembly, part of the 50S ribosomal subunit.

It is found in the plastid. The protein localises to the chloroplast. Functionally, binds to 23S rRNA. In Zygnema circumcarinatum (Green alga), this protein is Large ribosomal subunit protein uL23c (rpl23).